We begin with the raw amino-acid sequence, 311 residues long: Probable manganese-dependent inorganic pyrophosphatase (311 aa).

Mn(2+) is bound by residues His9, Asp13, Asp15, Asp77, His99, and Asp151.

The protein belongs to the PPase class C family. Mn(2+) is required as a cofactor.

It localises to the cytoplasm. It carries out the reaction diphosphate + H2O = 2 phosphate + H(+). The chain is Probable manganese-dependent inorganic pyrophosphatase from Streptococcus agalactiae serotype III (strain NEM316).